A 337-amino-acid polypeptide reads, in one-letter code: Holliday junction branch migration complex subunit RuvB (337 aa).

Positions 1–179 are large ATPase domain (RuvB-L); sequence MTHQVAVLHQ…FAFSARLSYY (179 aa). ATP-binding positions include Leu-18, Arg-19, Gly-60, Lys-63, Thr-64, Ser-65, 126-128, Arg-169, Tyr-179, and Arg-216; that span reads EDF. Residue Thr-64 participates in Mg(2+) binding. The segment at 180 to 250 is small ATPAse domain (RuvB-S); sequence SDQDLKEILV…VAEKALAMLL (71 aa). Residues 253–337 are head domain (RuvB-H); it reads DWGLNEIDIK…KNLLSLGEGQ (85 aa). 2 residues coordinate DNA: Lys-308 and Arg-313.

The protein belongs to the RuvB family. Homohexamer. Forms an RuvA(8)-RuvB(12)-Holliday junction (HJ) complex. HJ DNA is sandwiched between 2 RuvA tetramers; dsDNA enters through RuvA and exits via RuvB. An RuvB hexamer assembles on each DNA strand where it exits the tetramer. Each RuvB hexamer is contacted by two RuvA subunits (via domain III) on 2 adjacent RuvB subunits; this complex drives branch migration. In the full resolvosome a probable DNA-RuvA(4)-RuvB(12)-RuvC(2) complex forms which resolves the HJ.

Its subcellular location is the cytoplasm. The enzyme catalyses ATP + H2O = ADP + phosphate + H(+). In terms of biological role, the RuvA-RuvB-RuvC complex processes Holliday junction (HJ) DNA during genetic recombination and DNA repair, while the RuvA-RuvB complex plays an important role in the rescue of blocked DNA replication forks via replication fork reversal (RFR). RuvA specifically binds to HJ cruciform DNA, conferring on it an open structure. The RuvB hexamer acts as an ATP-dependent pump, pulling dsDNA into and through the RuvAB complex. RuvB forms 2 homohexamers on either side of HJ DNA bound by 1 or 2 RuvA tetramers; 4 subunits per hexamer contact DNA at a time. Coordinated motions by a converter formed by DNA-disengaged RuvB subunits stimulates ATP hydrolysis and nucleotide exchange. Immobilization of the converter enables RuvB to convert the ATP-contained energy into a lever motion, pulling 2 nucleotides of DNA out of the RuvA tetramer per ATP hydrolyzed, thus driving DNA branch migration. The RuvB motors rotate together with the DNA substrate, which together with the progressing nucleotide cycle form the mechanistic basis for DNA recombination by continuous HJ branch migration. Branch migration allows RuvC to scan DNA until it finds its consensus sequence, where it cleaves and resolves cruciform DNA. The protein is Holliday junction branch migration complex subunit RuvB of Chlamydia pneumoniae (Chlamydophila pneumoniae).